The chain runs to 107 residues: Iron-sulfur cluster assembly protein CyaY (107 aa).

Belongs to the frataxin family.

Involved in iron-sulfur (Fe-S) cluster assembly. May act as a regulator of Fe-S biogenesis. The polypeptide is Iron-sulfur cluster assembly protein CyaY (Neisseria meningitidis serogroup C / serotype 2a (strain ATCC 700532 / DSM 15464 / FAM18)).